A 587-amino-acid polypeptide reads, in one-letter code: Chaperonin CPN60, mitochondrial (587 aa).

The N-terminal 32 residues, 1-32, are a transit peptide targeting the mitochondrion; the sequence is MYRLISSIASKARVARNCTSQIGSRLSSTRNY.

This sequence belongs to the chaperonin (HSP60) family.

Its subcellular location is the mitochondrion. Implicated in mitochondrial protein import and macromolecular assembly. May facilitate the correct folding of imported proteins. May also prevent misfolding and promote the refolding and proper assembly of unfolded polypeptides generated under stress conditions in the mitochondrial matrix. The chain is Chaperonin CPN60, mitochondrial from Brassica napus (Rape).